The sequence spans 1216 residues: MERLATVRARLQEWERAFARLHGRRPAKGDVEAAPEETRALYREYRNLKQAVRQADDRHRVLEQSLAEAAEEAQEPSCWGPHLSRAATQNTQSMPKQSLLSSVQDYGKRLKANLKNTTQTGPTQSRKLQLQKRSLSTVPAPRPPGSKTESPCPDEADDALPRVPEPRPRLGQLQQLRSSLSRRLTSLDPGWLERCHNRVSDLLEVPGACGLDLSAEESQPQMSGKVNIADPDIQSEVSVQSPEAIAQQPAQVLSQSPKSINSKGRKRKWNEKGEDFAQDQPSSGAGPLSEGARATVHGQDPPGEPTQVNVPQPCNSSNQARTEKAKGTTHLHASPRPASLDRGNYIRLNMKNKRFVRVGANRGRLLRKQVWKQKWKKKQAAFGGSGPRATDKDTCFRCGQFGHWASQCSQPGPTLTVQEEGDRDDKQPISTLEEVAQRTGTASCHHSGEETQPAAPELQVPHCPTPMSPLYPPGPLGQVAETPAEVFQALERLGYRAFRPGQERAIMRILSGISTLLVLPTGAGKSLCYQLPALLYAQRSPCLTLVVSPLLSLMDDQVSDLPSCLKAACLHSGMTKKQRESVLKKVRAAQVHVLIVSPEALVGCGARGPGSLPQAAQLPPIAFACIDEVHCLSQWSHNFRPCYLRVCKVLREHMGVRCFLGLTATATRSTARDVAQHLGIAGEFELSGSANIPANLHLSVSMDRDSDQALVTLLQGDRFRTLDSVIIYCTRERIQNGWLALLRTCLSMVGDSRPRGCGPEAIAEAYHAGMSSQERRRVQQAFMRGHLRMVVATVAFGMGLDRPDVRAVLHLGLPPSFESYVQAIGRAGRDGKPAHCHLFMHPQGEDLWELRRHAHADSTDFLAVKRLVQRVFPPCTCSQRPVSKSSPEEVKEHSGQQTYPVLGQACLGHERALPVQSTVQALDMTEEAIETLLCYLELHPRHWLELLPWTYAQCHLHCLGGSAQLQALAHRCPPLAACQAKWPPKDTSQGRSSLEFGVVELADSMGWKLASVRQALHQLKWDPEPKKGAAQGTGVLVKFSELAFHLHSRGDLTDEEKDQICDFLYNRVQAREHKALAHLHQMSKAFRSVAFPSCGPCLEQSNEEHSNQVKTLVSYYFEEEEEEEETMTDTQGPKPGQTQLQDWEDQIRRDVRQLLSLRPEERFSGRAVARIFHGIASPCYPAQVYGLDRRFWRKYLHLDFHALMHLATEELLLRGR.

2 disordered regions span residues 72–100 (EAQEPSCWGPHLSRAATQNTQSMPKQSLL) and 113–171 (NLKN…PRLG). 2 stretches are compositionally biased toward polar residues: residues 86 to 100 (AATQNTQSMPKQSLL) and 114 to 137 (LKNTTQTGPTQSRKLQLQKRSLST). Residues serine 179 and serine 181 each carry the phosphoserine modification. Positions 235 to 340 (SEVSVQSPEA…LHASPRPASL (106 aa)) are disordered. 2 stretches are compositionally biased toward polar residues: residues 248 to 262 (QPAQVLSQSPKSINS) and 306 to 320 (TQVNVPQPCNSSNQA). The CCHC-type zinc finger occupies 393–410 (DTCFRCGQFGHWASQCSQ). Positions 436–458 (AQRTGTASCHHSGEETQPAAPEL) are disordered. Residues 506–684 (IMRILSGIST…AQHLGIAGEF (179 aa)) form the Helicase ATP-binding domain. 519-526 (LPTGAGKS) provides a ligand contact to ATP. Positions 627-630 (DEVH) match the DEAH box motif. The 168-residue stretch at 705–872 (DSDQALVTLL…AVKRLVQRVF (168 aa)) folds into the Helicase C-terminal domain. Zn(2+) contacts are provided by cysteine 875, cysteine 877, cysteine 906, and histidine 909.

It belongs to the helicase family. RecQ subfamily. Interacts with UBR1 and UBR2. Interacts with MCM10; this interaction regulates RECQL4 unwinding activity. Interacts with TOPBP1. Requires Zn(2+) as cofactor.

Its subcellular location is the cytoplasm. The protein localises to the nucleus. It catalyses the reaction Couples ATP hydrolysis with the unwinding of duplex DNA by translocating in the 3'-5' direction.. The catalysed reaction is ATP + H2O = ADP + phosphate + H(+). An ATP-dependent DNA helicase which unwinds dsDNA with a 3'-overhang in a 3'-5' direction. May play a role in development of the palate and the limbs. May modulate chromosome segregation. This chain is ATP-dependent DNA helicase Q4 (Recql4), found in Mus musculus (Mouse).